Here is a 407-residue protein sequence, read N- to C-terminus: Cell division control protein 12 (407 aa).

Serine 2 bears the N-acetylserine mark. In terms of domain architecture, Septin-type G spans 31–314; sequence EGGTFTVMLC…ETYRRLRLEG (284 aa). Positions 41-48 are G1 motif; it reads GESGLGKT. GTP is bound by residues 41–48, threonine 75, glycine 101, 180–188, glycine 247, and arginine 263; these read GESGLGKT and KADTLTAQE. The interval 98-101 is G3 motif; that stretch reads DTPG. The segment at 179–182 is G4 motif; sequence AKAD. A coiled-coil region spans residues 344-406; the sequence is EEENALKKYF…KSLQVKKSHL (63 aa).

The protein belongs to the TRAFAC class TrmE-Era-EngA-EngB-Septin-like GTPase superfamily. Septin GTPase family. As to quaternary structure, component of the septin complex which consists of CDC3, CDC10, CDC11, CDC12 and probably SHS1 and rearranges to a cortical collar of highly ordered filaments at the mother-bud-neck. A complex formed by CDC3, CDC10, CDC11 and CDC12 is capable of forming long filaments in vitro and the components seem to be present in a 2:2:2:2 arrangement in vivo. The filaments are proposed to be formed by the end-to-end polymerization of CDC3-CDC12-CDC11 complexes with CDC10 serving as a bridge to bundle the polymers into paired filaments. Component of the GIN4 complex composed of at least BNI5, CDC3, CDC10, CDC11, CDC12, GIN4, NAP1 and SHS1. Self-associates. Interacts with SYP1.

It is found in the membrane. The protein resides in the bud neck. In terms of biological role, septins are GTPases involved in cytokinesis that assemble early in the cell cycle as a patch at the incipient bud site and form a ring approximate 15 minutes before bud emergence, which transforms into an hour-glass shaped collar of cortical filaments that spans both sides of the mother-bud neck. This collar persists until just before cytokinesis, when it splits into two rings that occupy opposite sides of the neck. The septins at the bud neck serve as a structural scaffold that recruits different components involved in diverse processes at specific stages during the cell cycle. Many proteins bind asymmetrically to the septin collar. The septin assembly is regulated by protein kinases GIN4 and/or CLA4. May act by recruiting MYO1 and HOF1, a protein involved in septation, to the site of cleavage. Septins are also involved in cell morphogenesis, bud site selection, chitin deposition, cell cycle regulation, cell compartmentalization and spore wall formation. This Saccharomyces cerevisiae (strain ATCC 204508 / S288c) (Baker's yeast) protein is Cell division control protein 12 (CDC12).